A 404-amino-acid polypeptide reads, in one-letter code: CD2 homolog (404 aa).

An N-terminal signal peptide occupies residues 1-16 (MFITLIFLSYINIVLS). Residues 17–225 (NNYWARLNET…QNYFLENIHT (209 aa)) lie on the Extracellular side of the membrane. 10 N-linked (GlcNAc...) asparagine; by host glycosylation sites follow: Asn24, Asn87, Asn92, Asn96, Asn122, Asn139, Asn167, Asn193, Asn200, and Asn206. 2 disulfides stabilise this stretch: Cys140-Cys207 and Cys147-Cys190. The helical transmembrane segment at 226 to 246 (LFYIIIFIVSGLIASIFISII) threads the bilayer. The Cytoplasmic portion of the chain corresponds to 247–404 (TFLSLRKRKK…ISLIHVDRII (158 aa)). Positions 260 to 295 (EIESPPPESNEEEQCQHDDTTSIHEPSPREPLLPKP) are disordered. The segment covering 273-287 (QCQHDDTTSIHEPSP) has biased composition (basic and acidic residues). 7 repeat units span residues 322–327 (NPCPPP), 328–333 (KPCPPP), 334–339 (KPCPPP), 340–345 (KPCPPP), 346–351 (KPCPPP), 352–357 (KPCPPP), and 358–363 (KPCPPP). The tract at residues 322–363 (NPCPPPKPCPPPKPCPPPKPCPPPKPCPPPKPCPPPKPCPPP) is 7 X 6 AA tandem repeats of [KN]-P-C-P-P-P. Over residues 357 to 388 (PKPCPPPKPCSSPESYSPPKPLPSIPLLPNIP) the composition is skewed to pro residues. A disordered region spans residues 357 to 390 (PKPCPPPKPCSSPESYSPPKPLPSIPLLPNIPPL).

The protein belongs to the asfivirus CD2 homolog protein family. As to quaternary structure, both glycosylated and nonglycosylated forms interact (via C-terminus) with the host AP-1 complex. Post-translationally, cleaved into two fragments of 63 kDa and 26 kDa containing respectively the glycosylated N-terminus and the nonglycosylated C-terminus. A full-length 89-kDa glycosylated form also exists.

Its subcellular location is the host membrane. It is found in the virion membrane. The protein resides in the host Golgi apparatus. Its function is as follows. May play an immunosuppressive role by inhibiting lymphocyte proliferation and subsequently facilitating viral replication and generalization of infection. Responsible for viral hemadsorption, which may help viral spread. Increases virus replication in the tick vector at the step of virus uptake or replication in the tick gut. May play a role in the host Golgi reorganization to yield viral factories. May play a role in host cell penetration. The polypeptide is CD2 homolog (African swine fever virus (isolate Tick/South Africa/Pretoriuskop Pr4/1996) (ASFV)).